Here is a 575-residue protein sequence, read N- to C-terminus: V-type ATP synthase alpha chain (575 aa).

Position 238-245 (238-245 (GPFGAGKT)) interacts with ATP.

The protein belongs to the ATPase alpha/beta chains family.

It catalyses the reaction ATP + H2O + 4 H(+)(in) = ADP + phosphate + 5 H(+)(out). Its function is as follows. Produces ATP from ADP in the presence of a proton gradient across the membrane. The V-type alpha chain is a catalytic subunit. The protein is V-type ATP synthase alpha chain of Borrelia garinii subsp. bavariensis (strain ATCC BAA-2496 / DSM 23469 / PBi) (Borreliella bavariensis).